A 567-amino-acid chain; its full sequence is Oxygen-dependent choline dehydrogenase (567 aa).

6-35 serves as a coordination point for FAD; it reads DYIIVGAGSAGNTLATRLTEDEGVTVLLLE. The active-site Proton acceptor is H475.

Belongs to the GMC oxidoreductase family. It depends on FAD as a cofactor.

The catalysed reaction is choline + A = betaine aldehyde + AH2. The enzyme catalyses betaine aldehyde + NAD(+) + H2O = glycine betaine + NADH + 2 H(+). It participates in amine and polyamine biosynthesis; betaine biosynthesis via choline pathway; betaine aldehyde from choline (cytochrome c reductase route): step 1/1. In terms of biological role, involved in the biosynthesis of the osmoprotectant glycine betaine. Catalyzes the oxidation of choline to betaine aldehyde and betaine aldehyde to glycine betaine at the same rate. The chain is Oxygen-dependent choline dehydrogenase from Pseudomonas fluorescens (strain Pf0-1).